We begin with the raw amino-acid sequence, 1103 residues long: Ubiquitin carboxyl-terminal hydrolase 7 (1103 aa).

The span at 1–11 (MNHQQQQQQQQ) shows a compositional bias: low complexity. Disordered stretches follow at residues 1-41 (MNHQ…TQNP) and 46-65 (NVTL…DDTS). The tract at residues 1–209 (MNHQQQQQQQ…APHGVAWDSK (209 aa)) is interaction with TSPYL5. A Phosphoserine modification is found at Ser19. A compositionally biased stretch (acidic residues) spans 20–32 (EPEDMEMEAGDTD). A phosphoserine mark is found at Ser50 and Ser54. An interaction with p53/TP53 and MDM2 region spans residues 54-209 (SNAEEDMEDD…APHGVAWDSK (156 aa)). Residues 69 to 196 (EATFQFTVER…DDKVTFEVFV (128 aa)) form the MATH domain. Residues 71-206 (TFQFTVERFS…QADAPHGVAW (136 aa)) form a necessary for nuclear localization region. Residues 215–522 (VGLKNQGATC…NAYMLVYIRE (308 aa)) enclose the USP domain. The active-site Nucleophile is the Cys224. The Proton acceptor role is filled by His465. An N6-acetyllysine; alternate modification is found at Lys870. A Glycyl lysine isopeptide (Lys-Gly) (interchain with G-Cter in SUMO2); alternate cross-link involves residue Lys870. Residue Lys870 forms a Glycyl lysine isopeptide (Lys-Gly) (interchain with G-Cter in ubiquitin); alternate linkage. A Glycyl lysine isopeptide (Lys-Gly) (interchain with G-Cter in SUMO2) cross-link involves residue Lys883. At Ser964 the chain carries Phosphoserine. 2 positions are modified to N6-acetyllysine: Lys1085 and Lys1097.

The protein belongs to the peptidase C19 family. Monomer. Homodimer. Part of a complex with DAXX, MDM2, RASSF1 and USP7. Part of a complex with DAXX, MDM2 and USP7. Interacts with MDM2; the interaction is independent of p53/TP53. Interacts with DAXX; the interaction is direct and independent of MDM2 and p53/TP53. Component of a complex composed of KMT2E, OGT and USP7; the complex stabilizes KMT2E, preventing KMT2E ubiquitination and proteasomal-mediated degradation. Interacts (via MATH domain) with KMT2E. Interacts with OGT. Interacts with FOXO4; the interaction is enhanced in presence of hydrogen peroxide and occurs independently of p53/TP53. Interacts with p53/TP53; the interaction is enhanced in response to DNA damage; the interaction is impaired by TSPYL5. Interacts with PTEN; the interaction is direct. Interacts with ATXN1 and the strength of interaction is influenced by the length of the poly-Gln region in ATXN1. A weaker interaction seen with mutants having longer poly-Gln regions. Interacts with KIAA1530/UVSSA. Interacts with MEX3C and antagonizes its ability to degrade mRNA. Interacts with DNMT1 and UHRF1. Interacts with FOXP3. Interacts (via MATH domain) with RNF220. Associated component of the Polycomb group (PcG) multiprotein PRC1-like complex. Interacts with EPOP. Interacts with OTUD4 and USP9X; the interaction is direct. Interacts with CRY2. Interacts with REST. Interacts with ERCC6. Part of a complex consisting of USP7, MAGEL2 and TRIM27; directly interacts with MAGEL2; directly interacts with TRIM27. In terms of processing, polyneddylated. Not sumoylated. Post-translationally, polyubiquitinated. Ubiquitinated at Lys-870. Widely expressed. High expression is detected in brain, bone marrow, thymus and testis.

Its subcellular location is the nucleus. The protein resides in the cytoplasm. The protein localises to the PML body. It localises to the chromosome. The catalysed reaction is Thiol-dependent hydrolysis of ester, thioester, amide, peptide and isopeptide bonds formed by the C-terminal Gly of ubiquitin (a 76-residue protein attached to proteins as an intracellular targeting signal).. In terms of biological role, hydrolase that deubiquitinates target proteins such as ARMC5, FOXO4, DEPTOR, KAT5, p53/TP53, MDM2, ERCC6, DNMT1, UHRF1, PTEN, KMT2E/MLL5 and DAXX. Together with DAXX, prevents MDM2 self-ubiquitination and enhances the E3 ligase activity of MDM2 towards p53/TP53, thereby promoting p53/TP53 ubiquitination and proteasomal degradation. Deubiquitinates p53/TP53, preventing degradation of p53/TP53, and enhances p53/TP53-dependent transcription regulation, cell growth repression and apoptosis. Deubiquitinates p53/TP53 and MDM2 and strongly stabilizes p53/TP53 even in the presence of excess MDM2, and also induces p53/TP53-dependent cell growth repression and apoptosis. Deubiquitination of FOXO4 in presence of hydrogen peroxide is not dependent on p53/TP53 and inhibits FOXO4-induced transcriptional activity. In association with DAXX, is involved in the deubiquitination and translocation of PTEN from the nucleus to the cytoplasm, both processes that are counteracted by PML. Deubiquitinates KMT2E preventing KMT2E proteasomal-mediated degradation. Involved in cell proliferation during early embryonic development. Involved in transcription-coupled nucleotide excision repair (TC-NER) in response to UV damage: recruited to DNA damage sites following interaction with KIAA1530/UVSSA and promotes deubiquitination of ERCC6, preventing UV-induced degradation of ERCC6. Involved in maintenance of DNA methylation via its interaction with UHRF1 and DNMT1: acts by mediating deubiquitination of UHRF1 and DNMT1, preventing their degradation and promoting DNA methylation by DNMT1. Deubiquitinates alkylation repair enzyme ALKBH3. OTUD4 recruits USP7 and USP9X to stabilize ALKBH3, thereby promoting the repair of alkylated DNA lesions. Acts as a chromatin regulator via its association with the Polycomb group (PcG) multiprotein PRC1-like complex; may act by deubiquitinating components of the PRC1-like complex. Able to mediate deubiquitination of histone H2B; it is however unsure whether this activity takes place in vivo. Exhibits a preference towards 'Lys-48'-linked ubiquitin chains. Increases regulatory T-cells (Treg) suppressive capacity by deubiquitinating and stabilizing the transcription factor FOXP3 which is crucial for Treg cell function. Plays a role in the maintenance of the circadian clock periodicity via deubiquitination and stabilization of the CRY1 and CRY2 proteins. Deubiquitinates REST, thereby stabilizing REST and promoting the maintenance of neural progenitor cells. Deubiquitinates SIRT7, inhibiting SIRT7 histone deacetylase activity and regulating gluconeogenesis. Involved in the regulation of WASH-dependent actin polymerization at the surface of endosomes and the regulation of endosomal protein recycling. It maintains optimal WASH complex activity and precise F-actin levels via deubiquitination of TRIM27 and WASHC1. Mediates the deubiquitination of phosphorylated DEPTOR, promoting its stability and leading to decreased mTORC1 signaling. This is Ubiquitin carboxyl-terminal hydrolase 7 (Usp7) from Mus musculus (Mouse).